Here is a 788-residue protein sequence, read N- to C-terminus: Phosphoribosylformylglycinamidine synthase subunit PurL (788 aa).

The active site involves His50. Residues Tyr53 and Lys92 each contribute to the ATP site. Glu94 is a binding site for Mg(2+). Residues 95 to 98 (SHNH) and Arg117 contribute to the substrate site. Residue His96 is the Proton acceptor of the active site. Residue Asp118 participates in Mg(2+) binding. Position 241 (Gln241) interacts with substrate. Asp269 contributes to the Mg(2+) binding site. 313 to 315 (ESQ) is a substrate binding site. Asp524 and Gly561 together coordinate ATP. Asn562 contacts Mg(2+). Position 564 (Ser564) interacts with substrate.

The protein belongs to the FGAMS family. Monomer. Part of the FGAM synthase complex composed of 1 PurL, 1 PurQ and 2 PurS subunits.

It localises to the cytoplasm. It carries out the reaction N(2)-formyl-N(1)-(5-phospho-beta-D-ribosyl)glycinamide + L-glutamine + ATP + H2O = 2-formamido-N(1)-(5-O-phospho-beta-D-ribosyl)acetamidine + L-glutamate + ADP + phosphate + H(+). The protein operates within purine metabolism; IMP biosynthesis via de novo pathway; 5-amino-1-(5-phospho-D-ribosyl)imidazole from N(2)-formyl-N(1)-(5-phospho-D-ribosyl)glycinamide: step 1/2. Its function is as follows. Part of the phosphoribosylformylglycinamidine synthase complex involved in the purines biosynthetic pathway. Catalyzes the ATP-dependent conversion of formylglycinamide ribonucleotide (FGAR) and glutamine to yield formylglycinamidine ribonucleotide (FGAM) and glutamate. The FGAM synthase complex is composed of three subunits. PurQ produces an ammonia molecule by converting glutamine to glutamate. PurL transfers the ammonia molecule to FGAR to form FGAM in an ATP-dependent manner. PurS interacts with PurQ and PurL and is thought to assist in the transfer of the ammonia molecule from PurQ to PurL. In Nostoc punctiforme (strain ATCC 29133 / PCC 73102), this protein is Phosphoribosylformylglycinamidine synthase subunit PurL.